Here is a 179-residue protein sequence, read N- to C-terminus: Fimbrial subunit ElfA (179 aa).

The first 21 residues, 1 to 21 (MKKSVLTAFITVVCATSSVMA), serve as a signal peptide directing secretion.

Belongs to the fimbrial protein family.

The protein resides in the fimbrium. Part of the elfADCG-ycbUVF fimbrial operon, which promotes adhesion of bacteria to different abiotic surfaces. ElfA is the major fimbrial subunit produced by this operon. The chain is Fimbrial subunit ElfA (elfA) from Escherichia coli (strain K12).